The chain runs to 416 residues: L-cysteine:1D-myo-inositol 2-amino-2-deoxy-alpha-D-glucopyranoside ligase (416 aa).

Cys-45 lines the Zn(2+) pocket. L-cysteinyl-5'-AMP-binding positions include 45-48 (CGIT), Thr-60, and 83-85 (NVT). The 'HIGH' region motif lies at 47–57 (ITPYDSTHLGH). The 'ERGGDP' region signature appears at 191–196 (ERGGDP). Trp-232 contacts L-cysteinyl-5'-AMP. Cys-236 contributes to the Zn(2+) binding site. 254-256 (GSD) contributes to the L-cysteinyl-5'-AMP binding site. Position 261 (His-261) interacts with Zn(2+). Val-286 contacts L-cysteinyl-5'-AMP. The 'KMSKS' region signature appears at 292–296 (KMSKS).

It belongs to the class-I aminoacyl-tRNA synthetase family. MshC subfamily. Monomer. It depends on Zn(2+) as a cofactor.

The enzyme catalyses 1D-myo-inositol 2-amino-2-deoxy-alpha-D-glucopyranoside + L-cysteine + ATP = 1D-myo-inositol 2-(L-cysteinylamino)-2-deoxy-alpha-D-glucopyranoside + AMP + diphosphate + H(+). Catalyzes the ATP-dependent condensation of GlcN-Ins and L-cysteine to form L-Cys-GlcN-Ins. The protein is L-cysteine:1D-myo-inositol 2-amino-2-deoxy-alpha-D-glucopyranoside ligase of Brachybacterium faecium (strain ATCC 43885 / DSM 4810 / JCM 11609 / LMG 19847 / NBRC 14762 / NCIMB 9860 / 6-10).